The primary structure comprises 1534 residues: Alpha-2-macroglobulin homolog (1534 aa).

Positions 1–38 are cleaved as a signal peptide; the sequence is MDTQRFQSQFHWHLSFKFSGAIAACLSLSLVGTGLANA.

It belongs to the protease inhibitor I39 (alpha-2-macroglobulin) family. Bacterial alpha-2-macroglobulin subfamily.

The polypeptide is Alpha-2-macroglobulin homolog (yfaS) (Escherichia coli O157:H7).